Reading from the N-terminus, the 578-residue chain is Tetratricopeptide repeat protein 39A (578 aa).

TPR repeat units follow at residues 280-313 (AIFLFFAGRIEAIKGNIDAAVRRFEECCEAQQHW), 470-503 (CLVKLLKGLCLKYLGRIQEAEENFRSISANEKKI), and 511-544 (PNALLELALLFMEQGRNEEAIKLLESAKQNYKNY).

Belongs to the TTC39 family.

The chain is Tetratricopeptide repeat protein 39A (Ttc39a) from Mus musculus (Mouse).